A 300-amino-acid polypeptide reads, in one-letter code: MTDDTRTRLVAALRGELRFNEPMARHTALKVGGPADFFAIPADPSDLQSLMAVILEMGMPYLVVGGGYNLLVRDGGFRGVVISLKQFCSMEKLPDNRLRAEAGSTNQQLVRFANGQGLTGLEFLSGIPGMVGGALSVNAGAHGRSVLELVESLTTLQGGKITVTFREDLRYGYRHLELKPGEIVLAAVFSLAAGDAEEIEGRIQGYLEHRRNSQRVGYPNAGSFFKNPEGKQAWRLIDEAGLRGCQIGGAQVSEVHTNFLVNRGGAMAADFLQLAQVIKSKVRERSGIDLEEEVRIVGVD.

An FAD-binding PCMH-type domain is found at 30 to 194 (KVGGPADFFA…LAAVFSLAAG (165 aa)). The active site involves Arg174. Residue Ser223 is the Proton donor of the active site. Glu293 is a catalytic residue.

This sequence belongs to the MurB family. Requires FAD as cofactor.

It localises to the cytoplasm. The enzyme catalyses UDP-N-acetyl-alpha-D-muramate + NADP(+) = UDP-N-acetyl-3-O-(1-carboxyvinyl)-alpha-D-glucosamine + NADPH + H(+). Its pathway is cell wall biogenesis; peptidoglycan biosynthesis. Its function is as follows. Cell wall formation. This chain is UDP-N-acetylenolpyruvoylglucosamine reductase, found in Geotalea uraniireducens (strain Rf4) (Geobacter uraniireducens).